The primary structure comprises 174 residues: Gamma-crystallin F (174 aa).

Beta/gamma crystallin 'Greek key' domains are found at residues 2–40 (GKITFYEDRGFQGRHYECSSDHSNLQPYFSRCNSIRVDS) and 41–83 (GCWM…RLIP). Residues 84–87 (HTGS) are connecting peptide. 2 Beta/gamma crystallin 'Greek key' domains span residues 88-128 (HRLR…NVLE) and 129-171 (GWWV…RRAV).

It belongs to the beta/gamma-crystallin family.

Functionally, crystallins are the dominant structural components of the vertebrate eye lens. This chain is Gamma-crystallin F (CRYGF), found in Bos taurus (Bovine).